Reading from the N-terminus, the 101-residue chain is Protein Tat (101 aa).

The tract at residues Met1 to Asn24 is interaction with human CREBBP. The interval Met1–Gly48 is transactivation. 3 residues coordinate Zn(2+): Cys22, Cys25, and Cys27. The cysteine-rich stretch occupies residues Cys22–Cys37. Lys28 is modified (N6-acetyllysine; by host PCAF). 4 residues coordinate Zn(2+): Cys30, His33, Cys34, and Cys37. Residues Phe38 to Gly48 are core. The segment at Gly48–Asp101 is disordered. The short motif at Arg49 to Ser57 is the Nuclear localization signal, RNA-binding (TAR), and protein transduction element. The interaction with the host capping enzyme RNGTT stretch occupies residues Arg49–Glu86. N6-acetyllysine; by host EP300 and GCN5L2 is present on residues Lys50 and Lys51. Residues Arg52 and Arg53 each carry the asymmetric dimethylarginine; by host PRMT6 modification. Residue Lys71 forms a Glycyl lysine isopeptide (Lys-Gly) (interchain with G-Cter in ubiquitin) linkage. The span at Thr82–Asp101 shows a compositional bias: basic and acidic residues.

Belongs to the lentiviruses Tat family. In terms of assembly, interacts with host CCNT1. Associates with the P-TEFb complex composed at least of Tat, P-TEFb (CDK9 and CCNT1), TAR RNA, RNA Pol II. Recruits the HATs CREBBP, TAF1/TFIID, EP300, PCAF and GCN5L2. Interacts with host KAT5/Tip60; this interaction targets the latter to degradation. Interacts with the host deacetylase SIRT1. Interacts with host capping enzyme RNGTT; this interaction stimulates RNGTT. Binds to host KDR, and to the host integrins ITGAV/ITGB3 and ITGA5/ITGB1. Interacts with host KPNB1/importin beta-1 without previous binding to KPNA1/importin alpha-1. Interacts with EIF2AK2. Interacts with host nucleosome assembly protein NAP1L1; this interaction may be required for the transport of Tat within the nucleus, since the two proteins interact at the nuclear rim. Interacts with host C1QBP/SF2P32; this interaction involves lysine-acetylated Tat. Interacts with the host chemokine receptors CCR2, CCR3 and CXCR4. Interacts with host DPP4/CD26; this interaction may trigger an anti-proliferative effect. Interacts with host LDLR. Interacts with the host extracellular matrix metalloproteinase MMP1. Interacts with host PRMT6; this interaction mediates Tat's methylation. Interacts with, and is ubiquitinated by MDM2/Hdm2. Interacts with host PSMC3 and HTATIP2. Interacts with STAB1; this interaction may overcome SATB1-mediated repression of IL2 and IL2RA (interleukin) in T cells by binding to the same domain than HDAC1. Interacts (when acetylated) with human CDK13, thereby increasing HIV-1 mRNA splicing and promoting the production of the doubly spliced HIV-1 protein Nef. Interacts with host TBP; this interaction modulates the activity of transcriptional pre-initiation complex. Interacts with host RELA. Interacts with host PLSCR1; this interaction negatively regulates Tat transactivation activity by altering its subcellular distribution. Asymmetrical arginine methylation by host PRMT6 seems to diminish the transactivation capacity of Tat and affects the interaction with host CCNT1. In terms of processing, acetylation by EP300, CREBBP, GCN5L2/GCN5 and PCAF regulates the transactivation activity of Tat. EP300-mediated acetylation of Lys-50 promotes dissociation of Tat from the TAR RNA through the competitive binding to PCAF's bromodomain. In addition, the non-acetylated Tat's N-terminus can also interact with PCAF. PCAF-mediated acetylation of Lys-28 enhances Tat's binding to CCNT1. Lys-50 is deacetylated by SIRT1. Post-translationally, polyubiquitination by host MDM2 does not target Tat to degradation, but activates its transactivation function and fosters interaction with CCNT1 and TAR RNA. Phosphorylated by EIF2AK2 on serine and threonine residues adjacent to the basic region important for TAR RNA binding and function. Phosphorylation of Tat by EIF2AK2 is dependent on the prior activation of EIF2AK2 by dsRNA.

It is found in the host nucleus. It localises to the host nucleolus. The protein localises to the host cytoplasm. The protein resides in the secreted. In terms of biological role, transcriptional activator that increases RNA Pol II processivity, thereby increasing the level of full-length viral transcripts. Recognizes a hairpin structure at the 5'-LTR of the nascent viral mRNAs referred to as the transactivation responsive RNA element (TAR) and recruits the cyclin T1-CDK9 complex (P-TEFb complex) that will in turn hyperphosphorylate the RNA polymerase II to allow efficient elongation. The CDK9 component of P-TEFb and other Tat-activated kinases hyperphosphorylate the C-terminus of RNA Pol II that becomes stabilized and much more processive. Other factors such as HTATSF1/Tat-SF1, SUPT5H/SPT5, and HTATIP2 are also important for Tat's function. Besides its effect on RNA Pol II processivity, Tat induces chromatin remodeling of proviral genes by recruiting the histone acetyltransferases (HATs) CREBBP, EP300 and PCAF to the chromatin. This also contributes to the increase in proviral transcription rate, especially when the provirus integrates in transcriptionally silent region of the host genome. To ensure maximal activation of the LTR, Tat mediates nuclear translocation of NF-kappa-B by interacting with host RELA. Through its interaction with host TBP, Tat may also modulate transcription initiation. Tat can reactivate a latently infected cell by penetrating in it and transactivating its LTR promoter. In the cytoplasm, Tat is thought to act as a translational activator of HIV-1 mRNAs. Extracellular circulating Tat can be endocytosed by surrounding uninfected cells via the binding to several surface receptors such as CD26, CXCR4, heparan sulfate proteoglycans (HSPG) or LDLR. Neurons are rarely infected, but they internalize Tat via their LDLR. Through its interaction with nuclear HATs, Tat is potentially able to control the acetylation-dependent cellular gene expression. Modulates the expression of many cellular genes involved in cell survival, proliferation or in coding for cytokines or cytokine receptors. Tat plays a role in T-cell and neurons apoptosis. Tat induced neurotoxicity and apoptosis probably contribute to neuroAIDS. Circulating Tat also acts as a chemokine-like and/or growth factor-like molecule that binds to specific receptors on the surface of the cells, affecting many cellular pathways. In the vascular system, Tat binds to ITGAV/ITGB3 and ITGA5/ITGB1 integrins dimers at the surface of endothelial cells and competes with bFGF for heparin-binding sites, leading to an excess of soluble bFGF. The chain is Protein Tat from Homo sapiens (Human).